We begin with the raw amino-acid sequence, 207 residues long: Large ribosomal subunit protein uL4 (207 aa).

Residues 49–78 (HAVKNRSAVRGGGKKPWRQKGTGRARQGSI) are disordered. Residues 60 to 71 (GGKKPWRQKGTG) show a composition bias toward basic residues.

It belongs to the universal ribosomal protein uL4 family. As to quaternary structure, part of the 50S ribosomal subunit.

In terms of biological role, one of the primary rRNA binding proteins, this protein initially binds near the 5'-end of the 23S rRNA. It is important during the early stages of 50S assembly. It makes multiple contacts with different domains of the 23S rRNA in the assembled 50S subunit and ribosome. Its function is as follows. Forms part of the polypeptide exit tunnel. The sequence is that of Large ribosomal subunit protein uL4 from Ligilactobacillus salivarius (strain UCC118) (Lactobacillus salivarius).